The sequence spans 441 residues: Nucleolar and spindle-associated protein 1 (441 aa).

2 disordered regions span residues 47–186 and 216–267; these read ARKG…PNFK and MNEL…LGLK. 2 stretches are compositionally biased toward polar residues: residues 56–74 and 100–116; these read ESQT…ISNQ and DSQQ…PTEF. Residues 117 to 126 are compositionally biased toward basic and acidic residues; it reads QNHEKQESQD. Ser-124 is subject to Phosphoserine; by ATM. A Phosphoserine modification is found at Ser-135. A compositionally biased stretch (basic and acidic residues) spans 152 to 171; that stretch reads RDSKVPSEGKKSLYTDESSK. Thr-182 carries the post-translational modification Phosphothreonine. The interval 237 to 382 is interaction with microtubules; it reads GRLSVASTPI…HKGKLKPWGQ (146 aa). Ser-240 bears the Phosphoserine mark. Residues 241–264 show a composition bias toward polar residues; the sequence is VASTPISQRRSQGRSCGPASQSTL. Phosphothreonine is present on Thr-244. Phosphoserine is present on residues Ser-247, Ser-255, Ser-269, Ser-276, and Ser-311. The interval 286 to 319 is disordered; that stretch reads AATKDNEHKRSLTKTPARKSAHVTVSGGTPKGEA. Thr-314, Thr-338, and Thr-349 each carry phosphothreonine. Ser-352 and Ser-363 each carry phosphoserine. The KEN box signature appears at 384-390; the sequence is KENNYLN. The tract at residues 401–427 is disordered; the sequence is KTYKQPHLQTKEEQRKKREQERKEKKA. Positions 407-432 form a coiled coil; it reads HLQTKEEQRKKREQERKEKKAKVLGM. Residues 409 to 424 are compositionally biased toward basic and acidic residues; sequence QTKEEQRKKREQERKE. An N6-acetyllysine modification is found at Lys-411.

Belongs to the NUSAP family. Interacts with DNA and microtubules. Microtubule bundling is inhibited by IPO7, KPNA2 and KPNB1 while association with DNA is also inhibited by IPO7 and KPNA2. In terms of processing, ubiquitinated. Ubiquitination by FZR1 may lead to proteasome-dependent degradation of this protein. Phosphorylation by ATM in G2/M-phase induces mitotic arrest.

The protein resides in the cytoplasm. It localises to the nucleus. It is found in the nucleolus. The protein localises to the cytoskeleton. Its subcellular location is the spindle. The protein resides in the chromosome. Functionally, microtubule-associated protein with the capacity to bundle and stabilize microtubules. May associate with chromosomes and promote the organization of mitotic spindle microtubules around them. The polypeptide is Nucleolar and spindle-associated protein 1 (NUSAP1) (Homo sapiens (Human)).